Consider the following 100-residue polypeptide: Aspartyl/glutamyl-tRNA(Asn/Gln) amidotransferase subunit C (100 aa).

This sequence belongs to the GatC family. As to quaternary structure, heterotrimer of A, B and C subunits.

It catalyses the reaction L-glutamyl-tRNA(Gln) + L-glutamine + ATP + H2O = L-glutaminyl-tRNA(Gln) + L-glutamate + ADP + phosphate + H(+). The enzyme catalyses L-aspartyl-tRNA(Asn) + L-glutamine + ATP + H2O = L-asparaginyl-tRNA(Asn) + L-glutamate + ADP + phosphate + 2 H(+). Allows the formation of correctly charged Asn-tRNA(Asn) or Gln-tRNA(Gln) through the transamidation of misacylated Asp-tRNA(Asn) or Glu-tRNA(Gln) in organisms which lack either or both of asparaginyl-tRNA or glutaminyl-tRNA synthetases. The reaction takes place in the presence of glutamine and ATP through an activated phospho-Asp-tRNA(Asn) or phospho-Glu-tRNA(Gln). The polypeptide is Aspartyl/glutamyl-tRNA(Asn/Gln) amidotransferase subunit C (Corynebacterium aurimucosum (strain ATCC 700975 / DSM 44827 / CIP 107346 / CN-1) (Corynebacterium nigricans)).